The chain runs to 83 residues: Short neurotoxin 1 (83 aa).

Positions 1 to 21 are cleaved as a signal peptide; sequence MKTLLLTLVVVTIVCLDLGYT. Disulfide bonds link Cys24–Cys45, Cys38–Cys62, Cys64–Cys75, and Cys76–Cys81.

The protein belongs to the three-finger toxin family. Short-chain subfamily. Type I alpha-neurotoxin sub-subfamily. Expressed by the venom gland.

It is found in the secreted. In terms of biological role, binds to muscle nicotinic acetylcholine receptor (nAChR) and inhibit acetylcholine from binding to the receptor, thereby impairing neuromuscular transmission. The polypeptide is Short neurotoxin 1 (Pseudechis australis (Mulga snake)).